We begin with the raw amino-acid sequence, 193 residues long: MASDELPVAAAATEEEDLVEILDEGSGRLDIARYVDHVRDLAAGAIATFEGTTRDSFEGRRVVELRYEAYGAMARRRLAAILREARAAHSLRRLAVAHRLGTVPAGEASVFVAASAVHRADAMEACRYVIDEVKASVPIWKKEVYDDGEVWKENREFLDRTTTDGTTASSPAPATRPAKGGGCCGRKVRVNES.

Substrate-binding positions include H118 to R119, K134, and K141 to E143. A disordered region spans residues D159 to S193. Positions T163–A178 are enriched in low complexity.

Belongs to the MoaE family. MOCS2B subfamily. As to quaternary structure, heterotetramer; composed of 2 small (MOCS2A) and 2 large (MOCS2B) subunits.

Its subcellular location is the cytoplasm. It carries out the reaction 2 [molybdopterin-synthase sulfur-carrier protein]-C-terminal-Gly-aminoethanethioate + cyclic pyranopterin phosphate + H2O = molybdopterin + 2 [molybdopterin-synthase sulfur-carrier protein]-C-terminal Gly-Gly + 2 H(+). Its pathway is cofactor biosynthesis; molybdopterin biosynthesis. Its function is as follows. Catalytic subunit of the molybdopterin synthase complex, a complex that catalyzes the conversion of precursor Z into molybdopterin. Acts by mediating the incorporation of 2 sulfur atoms from thiocarboxylated MOCS2A into precursor Z to generate a dithiolene group. This chain is Molybdopterin synthase catalytic subunit, found in Oryza sativa subsp. japonica (Rice).